Reading from the N-terminus, the 831-residue chain is Thymine dioxygenase JBP1-B (831 aa).

Residues V80–A282 form a thymine dioxygenase region. 3 residues coordinate Fe cation: H207, D209, and H257. R273 serves as a coordination point for 2-oxoglutarate. Residues L409 to A578 are DNA-binding JBP1 domain.

This sequence belongs to the TET family. JBP1 subfamily. As to quaternary structure, monomer. Binds to DNA as a monomer. It depends on Fe(2+) as a cofactor.

Its subcellular location is the nucleus. The enzyme catalyses thymine + 2-oxoglutarate + O2 = 5-hydroxymethyluracil + succinate + CO2. Dioxygenase that catalyzes the first step of DNA base J (beta-d-glucosyl-HOMedU) biosynthesis by converting thymine to 5-hydroxymethyluracil (HOMedU). DNA base J is a hypermodified thymidine residue found in the genome of kinetoplastid parasites, which is localized primarily to repetitive DNA, namely the telomeres, and is implicated in the regulation of antigenic variation. Also specifically binds to base J-containing DNA (J-DNA). Involved in propagation and maintenance of DNA base J synthesis initiated by JBP2 by specifically binding already synthesized DNA base J and propagating J synthesis. Thymine dioxygenase activity and J-DNA-binding are independent functions. The chain is Thymine dioxygenase JBP1-B (JBP1B) from Trypanosoma cruzi (strain CL Brener).